The following is a 164-amino-acid chain: N5-carboxyaminoimidazole ribonucleotide mutase (164 aa).

Substrate-binding residues include S13, D16, and R43.

This sequence belongs to the AIR carboxylase family. Class I subfamily.

The catalysed reaction is 5-carboxyamino-1-(5-phospho-D-ribosyl)imidazole + H(+) = 5-amino-1-(5-phospho-D-ribosyl)imidazole-4-carboxylate. It functions in the pathway purine metabolism; IMP biosynthesis via de novo pathway; 5-amino-1-(5-phospho-D-ribosyl)imidazole-4-carboxylate from 5-amino-1-(5-phospho-D-ribosyl)imidazole (N5-CAIR route): step 2/2. Its function is as follows. Catalyzes the conversion of N5-carboxyaminoimidazole ribonucleotide (N5-CAIR) to 4-carboxy-5-aminoimidazole ribonucleotide (CAIR). In Haemophilus influenzae (strain ATCC 51907 / DSM 11121 / KW20 / Rd), this protein is N5-carboxyaminoimidazole ribonucleotide mutase.